A 441-amino-acid chain; its full sequence is Ribulose bisphosphate carboxylase/oxygenase activase, chloroplastic (441 aa).

Position 167-174 (167-174) interacts with ATP; sequence VWGGKGQG.

Belongs to the RuBisCO activase family.

The protein resides in the plastid. It localises to the chloroplast stroma. Functionally, activation of RuBisCO (ribulose-1,5-bisphosphate carboxylase/oxygenase; EC 4.1.1.39) involves the ATP-dependent carboxylation of the epsilon-amino group of lysine leading to a carbamate structure. The protein is Ribulose bisphosphate carboxylase/oxygenase activase, chloroplastic (RCA1) of Phaseolus vulgaris (Kidney bean).